A 1030-amino-acid chain; its full sequence is MPRRKQQAPKRAAGYAQEEVLKEEEEIKEEEEEEEDSGSVAQHQSSNDTGTDEELETGPEQKGYFSCQNSPGSHLSNQDAENESLLSDASDQVSDVKSVCGRDVSDKKANTHPKLPSEPHNCMDKMTAVYANILSDSYWSGLGLGFKLSNSERRNCDTRNSSGKNDFDWHQDALSKSLQQNLPSRSVSKPSLFSSVQLYRQSSKLCGSVFTGASRFRCRQCSAAYDTLVELTVHMNETGHYQDDNRKKDKLRPTSYSKPRKRAFQDMDKEDAQKVLKCMFCGDSFDSLQDLSVHMIKTKHYQKVPLKEPVPTISSKMVTPAKKRVFDVNRPCSPDSTTGSLADSFSSQKSANLQLPSNSRYGYQNGASYTWQFEACKSQILKCMECGSSHDTLQQLTTHMMVTGHFLKVTSSASKKGKQLVLDPLAVEKMQSLSETPNSESLAPKPSSNSPSECTASTTELKKESKKEKGEGIEDEQGVKSEDYEDSLQKPLDPTIKYQYLREEDLEDGSKGGGDILKSLENTVTTAINKAQNGAPSWSAYPSIHAAYQLSEGTKPPMAMGSQILQIRPNLANKLRPIAPKWKGMPLGPVPTSLALYTQVKKETEDKDEVVKQCGKESPHEEATSFSQPEGESFSKIEPPSESRKAEPCPLKEEEKPQKEKPEPLEPVSSLTNGCAPANHTPALPSINPLSALQSVLNNHLGKATEPLRSPSCSSPNSSTSPVFHKSSLHVVDKPVISPTSTRPAASVARHYLFENTDQPIDLTKSKSKRAESSQAQSCTSPPQKHALCDIADMVKVLPKATTPKPAASSRVPPMKLEIDVRRFEDVSSEVSTLHKRKGRQSNWNPQHLLILQAQFASSLFQTSEGKYLLSDLGPQERMQISKFTGLSMTTISHWLANVKYQLRKTGGTKFLKNMDKGHPIFYCSDCASQFRTPSTYISHLESHLGFQMKDMTRMAADQQSKVEQEISRVSSAQRSPETIAGEEDTDSKFKCKLCRRTFVSKHAVKLHLSKTHSKSPEHHSQFVADVDEE.

The tract at residues 1-120 (MPRRKQQAPK…THPKLPSEPH (120 aa)) is disordered. Residues 11–42 (RAAGYAQEEVLKEEEEIKEEEEEEEDSGSVAQ) are a coiled coil. Positions 21 to 37 (LKEEEEIKEEEEEEEDS) are enriched in acidic residues. Composition is skewed to polar residues over residues 39–49 (SVAQHQSSNDT) and 66–95 (SCQN…QVSD). The segment covering 103 to 120 (DVSDKKANTHPKLPSEPH) has biased composition (basic and acidic residues). K189 is covalently cross-linked (Glycyl lysine isopeptide (Lys-Gly) (interchain with G-Cter in SUMO2)). C2H2-type zinc fingers lie at residues 216-240 (FRCR…ETGH) and 276-300 (LKCM…KTKH). A disordered region spans residues 240-266 (HYQDDNRKKDKLRPTSYSKPRKRAFQD). Residues K307 and K316 each participate in a glycyl lysine isopeptide (Lys-Gly) (interchain with G-Cter in SUMO2) cross-link. A disordered region spans residues 328–348 (VNRPCSPDSTTGSLADSFSSQ). Residues 334 to 348 (PDSTTGSLADSFSSQ) show a composition bias toward polar residues. A C2H2-type 3; atypical zinc finger spans residues 381-405 (LKCMECGSSHDTLQQLTTHMMVTGH). K418 participates in a covalent cross-link: Glycyl lysine isopeptide (Lys-Gly) (interchain with G-Cter in SUMO2). The segment covering 432 to 459 (SLSETPNSESLAPKPSSNSPSECTASTT) has biased composition (polar residues). The interval 432–488 (SLSETPNSESLAPKPSSNSPSECTASTTELKKESKKEKGEGIEDEQGVKSEDYEDSL) is disordered. Residues 460-482 (ELKKESKKEKGEGIEDEQGVKSE) show a composition bias toward basic and acidic residues. Residues K462, K480, K497, and K601 each participate in a glycyl lysine isopeptide (Lys-Gly) (interchain with G-Cter in SUMO2) cross-link. Composition is skewed to basic and acidic residues over residues 608–623 (DEVV…HEEA) and 633–664 (SFSK…KPEP). Disordered stretches follow at residues 608-687 (DEVV…LPSI), 703-726 (KATE…VFHK), and 759-784 (QPID…SPPQ). Residue K652 forms a Glycyl lysine isopeptide (Lys-Gly) (interchain with G-Cter in SUMO2) linkage. Low complexity predominate over residues 710–722 (SPSCSSPNSSTSP). Over residues 773 to 783 (SSQAQSCTSPP) the composition is skewed to polar residues. Residues K796 and K816 each participate in a glycyl lysine isopeptide (Lys-Gly) (interchain with G-Cter in SUMO2) cross-link. The homeobox DNA-binding region spans 837-907 (RKGRQSNWNP…NVKYQLRKTG (71 aa)). The C2H2-type 4 zinc-finger motif lies at 922–944 (FYCSDCASQFRTPSTYISHLESH). K962 participates in a covalent cross-link: Glycyl lysine isopeptide (Lys-Gly) (interchain with G-Cter in SUMO2). Disordered regions lie at residues 965–987 (QEIS…EDTD) and 1009–1030 (LSKT…VDEE). Residues 968–977 (SRVSSAQRSP) are compositionally biased toward polar residues. S976 carries the post-translational modification Phosphoserine. The segment at 990 to 1013 (FKCKLCRRTFVSKHAVKLHLSKTH) adopts a C2H2-type 5 zinc-finger fold.

The protein belongs to the teashirt C2H2-type zinc-finger protein family. Interacts (via homeobox domain) with APBB1 (via PID domain 1). Post-translationally, sumoylated.

It is found in the nucleus. Functionally, probable transcriptional regulator involved in developmental processes. May act as a transcriptional repressor (Potential). The polypeptide is Teashirt homolog 2 (Tshz2) (Mus musculus (Mouse)).